We begin with the raw amino-acid sequence, 4118 residues long: BEACH domain-containing protein lvsB (4118 aa).

A disordered region spans residues 1–35 (MNRNFNNINNNNNNNNNYHGYQYHQQQQQQNQQQQ). Residues 198 to 218 (GIPLSFLNFLITILLRILSLP) form a helical membrane-spanning segment. The segment covering 236–257 (NFSGNNNNNFNNNNHYFNNNHN) has biased composition (low complexity). 3 disordered regions span residues 236–267 (NFSGNNNNNFNNNNHYFNNNHNNHNHHYQHHQ), 332–382 (PLSS…SKNN), and 621–644 (ISSSDNNNNNNNNSDGVNDDKNNN). Residues 258 to 267 (NHNHHYQHHQ) are compositionally biased toward basic residues. 2 stretches are compositionally biased toward low complexity: residues 332–381 (PLSS…NSKN) and 621–636 (ISSSDNNNNNNNNSDG). The chain crosses the membrane as a helical span at residues 827 to 847 (YLVLYMIVTEILSLLLELLVP). Low complexity predominate over residues 1155–1170 (NGGSISPSSIINNMNS). 11 disordered regions span residues 1155 to 1213 (NGGS…FNNN), 1599 to 1622 (ANTTTNSTTASTTTTTTNSTTAVS), 1643 to 1681 (NSGISRENSLGGRDSIGSNSSSSSSSSNSGVSSGSSTNL), 1928 to 1968 (GNFL…ISSS), 2015 to 2044 (STNNNSNNSNNSNSNNNNNNNNTNYNSNSL), 2537 to 2574 (RRGSSSSSTNSTTNNNNNNSSTTTTSNNNNNNNENNNE), 2702 to 2741 (FSPSRSKEKEKEKEKEKEKEKEKEKERERERETTNVTSDS), 2754 to 2791 (DQSNEESSTTDSDSTSDNNNNNNRNSYSGRNIRGNGIN), 2902 to 3007 (NTNS…NSNE), 3245 to 3265 (PLIPDLSTPSTPPSPQNTKDQ), and 3348 to 3418 (KTTA…NIVK). Low complexity-rich tracts occupy residues 1657-1678 (SIGSNSSSSSSSSNSGVSSGSS) and 1935-1968 (SSSNNNLRERSINNNNNNNNNSNNNNNNNSISSS). Over residues 2540 to 2571 (SSSSSTNSTTNNNNNNSSTTTTSNNNNNNNEN) the composition is skewed to low complexity. Residues 2705–2738 (SRSKEKEKEKEKEKEKEKEKEKERERERETTNVT) adopt a coiled-coil conformation. Residues 2706 to 2734 (RSKEKEKEKEKEKEKEKEKEKERERERET) are compositionally biased toward basic and acidic residues. Composition is skewed to low complexity over residues 2758–2791 (EESSTTDSDSTSDNNNNNNRNSYSGRNIRGNGIN) and 2902–2947 (NTNS…NSTN). Residues 2948 to 2962 (QTITDTTLSPASSNV) are compositionally biased toward polar residues. 2 stretches are compositionally biased toward low complexity: residues 2963–2980 (SISNQSTPISNNNNNNNS) and 2988–3006 (SNINIPPTINISDSNSNSN). Residues 3303-3479 (KLGEKVNEVF…DRDIVYDLIM (177 aa)) form the BEACH-type PH domain. Low complexity predominate over residues 3357–3411 (SNNNNNNNNNNNNNNNNNNNNSNDTTSSINSTTATNTNTTNTTTTNTTTTTTTTN). The region spanning 3491-3782 (AEVHGNILKM…QIFTKPHPKK (292 aa)) is the BEACH domain. WD repeat units lie at residues 3868 to 3907 (VLNDDIICGDITKNGRLFVTGGTAGTVKVWKRCNNDGTIM), 3924 to 3963 (GHTNSILCVTVSQEYSIIVSGSKDSNCIIWDLNRLTYINS), 3984 to 4027 (TFET…LAKQ), 4029 to 4073 (FVND…KIRT), and 4075 to 4114 (VSKSTITALAVSKDNTQLISGDINGLIECLSSRSFDGYSS).

It localises to the membrane. The protein localises to the lysosome. Its subcellular location is the endosome. In terms of biological role, involved in negative regulation of lysosome biogenesis, by limiting the heterotypic fusion of early endosomes and postlysosomal compartments. This chain is BEACH domain-containing protein lvsB (lvsB), found in Dictyostelium discoideum (Social amoeba).